Here is a 185-residue protein sequence, read N- to C-terminus: Ribosome-recycling factor (185 aa).

Belongs to the RRF family.

It localises to the cytoplasm. Its function is as follows. Responsible for the release of ribosomes from messenger RNA at the termination of protein biosynthesis. May increase the efficiency of translation by recycling ribosomes from one round of translation to another. The polypeptide is Ribosome-recycling factor (Shewanella sediminis (strain HAW-EB3)).